Reading from the N-terminus, the 1272-residue chain is uncharacterized protein (1272 aa).

3 coiled-coil regions span residues 185–212 (IEFL…EAVN), 246–274 (KNSA…YLDA), and 607–640 (ALGK…NTVI). The segment at 1179 to 1231 (ELPETSQQPVVPTPPATRPSSPIPPESDILTEEEQLEEQPPRQQQATRKTTTT) is disordered. Pro residues predominate over residues 1189–1203 (VPTPPATRPSSPIPP). Positions 1219–1231 (PRQQQATRKTTTT) are enriched in low complexity.

This is an uncharacterized protein from Magallana gigas (Pacific oyster).